We begin with the raw amino-acid sequence, 335 residues long: Urokinase plasminogen activator surface receptor (335 aa).

Positions 1 to 22 (MGHPPLLPLLLLLHTCVPASWG) are cleaved as a signal peptide. 3 consecutive UPAR/Ly6 domains span residues 23-114 (LRCM…RSRY), 115-213 (LECI…PQNG), and 214-305 (RQCY…YRSG). Intrachain disulfides connect Cys25-Cys46, Cys28-Cys34, and Cys39-Cys67. Residue Asn74 is glycosylated (N-linked (GlcNAc...) asparagine). 11 disulfides stabilise this stretch: Cys93–Cys98, Cys117–Cys144, Cys120–Cys127, Cys137–Cys169, Cys175–Cys192, Cys193–Cys198, Cys216–Cys244, Cys219–Cys227, Cys237–Cys263, Cys269–Cys287, and Cys288–Cys293. A glycan (N-linked (GlcNAc...) asparagine) is linked at Asn124. N-linked (GlcNAc...) asparagine glycosylation is found at Asn184, Asn194, Asn222, and Asn255. Residue Gly305 is the site of GPI-anchor amidated glycine attachment. A propeptide spans 306-335 (AAPQPGPAHLSLTITLLMTARLWGGTLLWT) (removed in mature form).

As to quaternary structure, monomer. Interacts (via the UPAR/Ly6 domains) with SRPX2. Interacts with MRC2. Interacts with FAP (seprase); the interaction occurs at the cell surface of invadopodia membrane. Interacts with SORL1 (via N-terminal ectodomain); this interaction decreases PLAUR internalization. The ternary complex composed of PLAUR-PLAU-SERPINE1 also interacts with SORL1. Interacts with CD82; this interaction prevents PLAUR from binding to its high affinity ligand PLAU.

It localises to the cell membrane. Its subcellular location is the cell projection. The protein localises to the invadopodium membrane. Acts as a receptor for urokinase plasminogen activator. Plays a role in localizing and promoting plasmin formation. Mediates the proteolysis-independent signal transduction activation effects of U-PA. It is subject to negative-feedback regulation by U-PA which cleaves it into an inactive form. The sequence is that of Urokinase plasminogen activator surface receptor (PLAUR) from Pan troglodytes (Chimpanzee).